Reading from the N-terminus, the 345-residue chain is S-adenosylmethionine:tRNA ribosyltransferase-isomerase (345 aa).

This sequence belongs to the QueA family. Monomer.

The protein resides in the cytoplasm. The catalysed reaction is 7-aminomethyl-7-carbaguanosine(34) in tRNA + S-adenosyl-L-methionine = epoxyqueuosine(34) in tRNA + adenine + L-methionine + 2 H(+). Its pathway is tRNA modification; tRNA-queuosine biosynthesis. Its function is as follows. Transfers and isomerizes the ribose moiety from AdoMet to the 7-aminomethyl group of 7-deazaguanine (preQ1-tRNA) to give epoxyqueuosine (oQ-tRNA). The sequence is that of S-adenosylmethionine:tRNA ribosyltransferase-isomerase from Finegoldia magna (strain ATCC 29328 / DSM 20472 / WAL 2508) (Peptostreptococcus magnus).